An 876-amino-acid polypeptide reads, in one-letter code: MEQSVSARWLKRYRAFFLILLLIVAIQLFLAYKSLDIVGGGSGSGFDAAEAPASPPPPHAQARVQPPARTKLTAQQLGFQPECDILAREAISALQRAKTKDCREHIAQIACAIQAGRFYAPQLRSSCPAGNHTANVSLGCFKDEKDRRLLAGYYSSSKTSNSPAKCVELCLQSGYPYAGVQYGRECFCGYDPPPKASKLPDSSCNTKCLGNAKEICGGFYAMNIYETGIAKFTAQLAATTPSEETKRVRIAFLLTLNGRALRQVHRLLKALYAPEHVYYIHVDERQDYLYRKLLELESKFPNIRLARKRFSTIWGGASLLTMLLQCMEDLLQSNWHWDFVINLSESDFPVKTLDKLVDFLSANPGRNFVKGHGRETQKFIQKQGLDKTFVECDTHMWRIGDRKLPAGIQVDGGSDWVALSRPFVGYVTHPREDDELLQALLKLFRHTLLPAESFFHTVLRNTKHCTSYVDNNLHVTNWKRKQGCKCQYKHVVDWCGCSPNDFKPEDWPRLQATEQKSLFFARKFEPVINQAVLLQLEEWLYGPYTSEYANLHGYWQSLYHHEDVHGSGDDLARSIGDSVMRLSARQAKLYPLELIELTHYLHRDQYKGFLVRYRARGSTGKPLHLETRVRPTQQGKLARNARFSKRLRNFEVSTDFDQKEQIARNFGKLLGPQSDLLLSYTLQANADSGAASHSYNLTLLWIDPLGRLQDFNELHVEDSTSDVINHSKTLLKHPITPGIWTAKLIGRNSIYAQLKFLIAPLAYYKGYPLAKSSDAEALNAGLTVALPEDFEMPVEWQQHLQTDDEQFTMREESLAKGKMLGQELHSWIDGLVGQFFQLRESCVVEADSEVSLPLCSDAPWSSLAPDPKSDVDALLK.

Topologically, residues 1 to 14 (MEQSVSARWLKRYR) are cytoplasmic. A helical; Signal-anchor for type II membrane protein membrane pass occupies residues 15–35 (AFFLILLLIVAIQLFLAYKSL). The Lumenal portion of the chain corresponds to 36-876 (DIVGGGSGSG…PKSDVDALLK (841 aa)). A disordered region spans residues 48–67 (AAEAPASPPPPHAQARVQPP). 4 disulfide bridges follow: cysteine 83-cysteine 111, cysteine 127-cysteine 465, cysteine 484-cysteine 497, and cysteine 486-cysteine 495. N-linked (GlcNAc...) asparagine glycosylation is found at asparagine 131 and asparagine 135. In terms of domain architecture, WSC spans 134–228 (ANVSLGCFKD…FYAMNIYETG (95 aa)). Residues aspartate 283 and 312–314 (TIW) contribute to the UDP-alpha-D-xylose site. Asparagine 342 is a glycosylation site (N-linked (GlcNAc...) asparagine). 415–416 (DW) is a UDP-alpha-D-xylose binding site. UDP-alpha-D-xylose-binding positions include serine 498 and 522–523 (RK). N-linked (GlcNAc...) asparagine glycosylation is found at asparagine 696 and asparagine 725. An intrachain disulfide couples cysteine 842 to cysteine 855.

The protein belongs to the glycosyltransferase 14 family. XylT subfamily. It depends on Ca(2+) as a cofactor. Mn(2+) is required as a cofactor. Mg(2+) serves as cofactor.

It localises to the endoplasmic reticulum membrane. Its subcellular location is the golgi apparatus membrane. It carries out the reaction UDP-alpha-D-xylose + L-seryl-[protein] = 3-O-(beta-D-xylosyl)-L-seryl-[protein] + UDP + H(+). It functions in the pathway glycan metabolism; chondroitin sulfate biosynthesis. The protein operates within glycan metabolism; heparan sulfate biosynthesis. Functionally, catalyzes the first step in biosynthesis of glycosaminoglycan. Transfers D-xylose from UDP-D-xylose to specific serine residues of the core protein. This chain is Xylosyltransferase oxt, found in Drosophila melanogaster (Fruit fly).